The following is a 494-amino-acid chain: Tripartite motif-containing protein 5 (494 aa).

Ala2 carries the post-translational modification N-acetylalanine. Residues 15–59 (CPICLELLTEPLSLDCGHSFCQACITANHKESTLHQGERSCPLCR) form an RING-type zinc finger. A Phosphoserine modification is found at Ser86. A B box-type zinc finger spans residues 91-132 (QKVDLCARHGEKLLLFCQQDGNVICWLCERSQEHRGHHTFLV). 4 residues coordinate Zn(2+): Cys96, His99, Cys118, and His124. A coiled-coil region spans residues 140–223 (RENLQVVLEM…RLVQSENDMV (84 aa)). Residues 186–199 (FKQLRDILDCEESN) form a required for interaction with GABARAP and for autophagy region. A B30.2/SPRY domain is found at 280–494 (PDLKGMLQVS…LPMTLCSPRS (215 aa)).

The protein belongs to the TRIM/RBCC family. In terms of assembly, can form homodimers and homotrimers. In addition to lower-order dimerization, also exhibits a higher-order multimerization and both low- and high-order multimerizations are essential for its restriction activity. Interacts with BTBD1 and BTBD2. Interacts with PSMC4, PSMC5, PSMD7 and HSPA8/HSC70. Interacts (via B30.2/SPRY domain) with HSPA1A/B. Interacts with PSMC2, MAP3K7/TAK1, TAB2 and TAB3. Interacts with SQSTM1. Interacts with TRIM6 and TRIM34. Interacts with ULK1 (phosphorylated form), GABARAP, GABARAPL1, GABARAPL2, MAP1LC3A, MAP1LC3C and BECN1. In terms of processing, degraded in a proteasome-independent fashion in the absence of viral infection but in a proteasome-dependent fashion following exposure to restriction sensitive virus. Post-translationally, autoubiquitinated in a RING finger- and UBE2D2-dependent manner. Monoubiquitinated by TRIM21. Deubiquitinated by Yersinia YopJ. Ubiquitination may not lead to proteasomal degradation.

It localises to the cytoplasm. It is found in the nucleus. It carries out the reaction S-ubiquitinyl-[E2 ubiquitin-conjugating enzyme]-L-cysteine + [acceptor protein]-L-lysine = [E2 ubiquitin-conjugating enzyme]-L-cysteine + N(6)-ubiquitinyl-[acceptor protein]-L-lysine.. It participates in protein modification; protein ubiquitination. Functionally, capsid-specific restriction factor that prevents infection from non-host-adapted retroviruses. Blocks viral replication early in the life cycle, after viral entry but before reverse transcription. In addition to acting as a capsid-specific restriction factor, also acts as a pattern recognition receptor that activates innate immune signaling in response to the retroviral capsid lattice. Binding to the viral capsid triggers its E3 ubiquitin ligase activity, and in concert with the heterodimeric ubiquitin conjugating enzyme complex UBE2V1-UBE2N (also known as UBC13-UEV1A complex) generates 'Lys-63'-linked polyubiquitin chains, which in turn are catalysts in the autophosphorylation of the MAP3K7/TAK1 complex (includes TAK1, TAB2, and TAB3). Activation of the MAP3K7/TAK1 complex by autophosphorylation results in the induction and expression of NF-kappa-B and MAPK-responsive inflammatory genes, thereby leading to an innate immune response in the infected cell. Plays a role in regulating autophagy through activation of autophagy regulator BECN1 by causing its dissociation from its inhibitors BCL2 and TAB2. In Plecturocebus donacophilus (Bolivian gray titi monkey), this protein is Tripartite motif-containing protein 5 (TRIM5).